Here is a 508-residue protein sequence, read N- to C-terminus: WD repeat-containing protein JIP5 (508 aa).

WD repeat units follow at residues 62–105, 106–145, 149–188, 193–233, 253–294, and 345–382; these read EARK…WRTK, RHKG…VVKK, DGGS…TKNT, HGGD…MKQP, DQED…LEDQ, and SGLD…NSDS. Positions 376-508 are disordered; sequence KEENSDSDSD…SHGITKFDGL (133 aa). Residues 380–393 are compositionally biased toward acidic residues; the sequence is SDSDSDSDINDDSE. The segment covering 407–419 has biased composition (low complexity); sequence ELGSGSESEVESD. One copy of the WD 7 repeat lies at 431–472; it reads CTGSDLPGDIEGSEGENNSNDDDNHDDREELWKELDQPTSDE. Acidic residues predominate over residues 441–454; that stretch reads EGSEGENNSNDDDN. A compositionally biased stretch (basic and acidic residues) spans 455–466; it reads HDDREELWKELD. Over residues 478–492 the composition is skewed to basic residues; that stretch reads KRSLKVKDKKNKKFK.

This sequence belongs to the WD repeat WDR55 family.

It is found in the nucleus. The protein localises to the nucleolus. The sequence is that of WD repeat-containing protein JIP5 (JIP5) from Candida glabrata (strain ATCC 2001 / BCRC 20586 / JCM 3761 / NBRC 0622 / NRRL Y-65 / CBS 138) (Yeast).